Reading from the N-terminus, the 876-residue chain is Leucine--tRNA ligase (876 aa).

Positions proline 42–histidine 52 match the 'HIGH' region motif. The short motif at lysine 634 to serine 638 is the 'KMSKS' region element. Lysine 637 contacts ATP.

The protein belongs to the class-I aminoacyl-tRNA synthetase family.

Its subcellular location is the cytoplasm. It carries out the reaction tRNA(Leu) + L-leucine + ATP = L-leucyl-tRNA(Leu) + AMP + diphosphate. This is Leucine--tRNA ligase from Variovorax paradoxus (strain S110).